We begin with the raw amino-acid sequence, 192 residues long: Peptidyl-tRNA hydrolase (192 aa).

A tRNA-binding site is contributed by Y16. H21 serves as the catalytic Proton acceptor. 2 residues coordinate tRNA: Y66 and N68.

The protein belongs to the PTH family. In terms of assembly, monomer.

Its subcellular location is the cytoplasm. It catalyses the reaction an N-acyl-L-alpha-aminoacyl-tRNA + H2O = an N-acyl-L-amino acid + a tRNA + H(+). Hydrolyzes ribosome-free peptidyl-tRNAs (with 1 or more amino acids incorporated), which drop off the ribosome during protein synthesis, or as a result of ribosome stalling. In terms of biological role, catalyzes the release of premature peptidyl moieties from peptidyl-tRNA molecules trapped in stalled 50S ribosomal subunits, and thus maintains levels of free tRNAs and 50S ribosomes. This chain is Peptidyl-tRNA hydrolase, found in Aquifex aeolicus (strain VF5).